Here is a 193-residue protein sequence, read N- to C-terminus: Segregation and condensation protein B (193 aa).

The protein belongs to the ScpB family. As to quaternary structure, homodimer. Homodimerization may be required to stabilize the binding of ScpA to the Smc head domains. Component of a cohesin-like complex composed of ScpA, ScpB and the Smc homodimer, in which ScpA and ScpB bind to the head domain of Smc. The presence of the three proteins is required for the association of the complex with DNA.

The protein resides in the cytoplasm. Functionally, participates in chromosomal partition during cell division. May act via the formation of a condensin-like complex containing Smc and ScpA that pull DNA away from mid-cell into both cell halves. This chain is Segregation and condensation protein B, found in Clostridium botulinum (strain 657 / Type Ba4).